The following is a 413-amino-acid chain: RNA-binding protein 41 (413 aa).

A compositionally biased stretch (polar residues) spans 223-235 (SVGDSGTAESPSL). Residues 223-247 (SVGDSGTAESPSLLQDKGKQAAQGK) are disordered. Ser232 carries the post-translational modification Phosphoserine. The RRM domain maps to 309-387 (KVLYLKNLSP…KILVIEFGKN (79 aa)).

In terms of biological role, may bind RNA. The polypeptide is RNA-binding protein 41 (RBM41) (Homo sapiens (Human)).